The sequence spans 130 residues: Fluoride-specific ion channel FluC (130 aa).

A run of 4 helical transmembrane segments spans residues 2-22 (GLLL…RFAL), 36-56 (GILL…AFLI), 71-91 (FLLV…SLDI), and 100-120 (IFIA…AVIL). The Na(+) site is built by Gly79 and Thr82.

This sequence belongs to the fluoride channel Fluc/FEX (TC 1.A.43) family.

Its subcellular location is the cell inner membrane. The catalysed reaction is fluoride(in) = fluoride(out). Na(+) is not transported, but it plays an essential structural role and its presence is essential for fluoride channel function. In terms of biological role, fluoride-specific ion channel. Important for reducing fluoride concentration in the cell, thus reducing its toxicity. This is Fluoride-specific ion channel FluC from Francisella tularensis subsp. tularensis (strain FSC 198).